Consider the following 143-residue polypeptide: uncharacterized protein (143 aa).

The segment at 35–59 is disordered; it reads ITKDRGDRDDGRYGEPRIQRKPGQL. The segment covering 36–52 has biased composition (basic and acidic residues); it reads TKDRGDRDDGRYGEPRI.

This is an uncharacterized protein from Streptomyces fradiae (Streptomyces roseoflavus).